Here is a 331-residue protein sequence, read N- to C-terminus: Laforin (331 aa).

In terms of domain architecture, CBM20 spans 1–124 (MRFRFGVVVP…NNLVDGVYCL (124 aa)). Serine 25 is subject to Phosphoserine; by AMPK. Residues tryptophan 32, lysine 87, 103-107 (GPHHD), aspartate 197, aspartate 235, and arginine 241 each bind substrate. Positions 156-323 (HYSRILPNIW…QEDFFQKFGK (168 aa)) constitute a Tyrosine-protein phosphatase domain. Cysteine 266 functions as the Phosphocysteine intermediate in the catalytic mechanism. The Glucan phosphatase signature motif CXAGXGR signature appears at 266 to 272 (CNAGVGR). Substrate contacts are provided by residues 267–272 (NAGVGR) and tyrosine 304.

The protein belongs to the protein-tyrosine phosphatase family. As to quaternary structure, homodimer. Interacts with itself. Interacts with PPP1R3B, PPP1R3C, PPP1R3D, HIRIP5, and EPM2AIP1. Binds glycogen and Lafora bodies. Interacts with NHLRC1/malin (via the NHL repeats). Forms a complex with NHLRC1/malin and HSP70. Interacts with PPP1R3D; in the presence of NHLC1/malin the interaction leads to ubiquitination and autophagic degradation of PPP1R3D. Interacts (via the phosphatase domain) with MAPT/Tau; the interaction dephosphorylates MAPT. Isoform 1 and isoform 2 interact to form a heterodimeric complex that lacks phosphatase activity (in vitro). Active phosphatase isoform 7 and isoform 1 interact with each other, but give rise to lower phosphatase activity than isoform 1 or isoform 7 by themselves (in vitro). Active phosphatase isoform 7 and inactive isoform 2 interact with each other, but give rise to lower phosphatase activity than isoform 7 by itself (in vitro). Interacts with PRDM8. Polyubiquitinated by NHLRC1/malin. In terms of processing, phosphorylation on Ser-25 by AMPK affects the phosphatase activity of the enzyme and its ability to homodimerize and interact with NHLRC1, PPP1R3C or PRKAA2. Expressed in heart, skeletal muscle, kidney, pancreas and brain. Isoform 4 is also expressed in the placenta.

It is found in the cytoplasm. Its subcellular location is the endoplasmic reticulum membrane. It localises to the cell membrane. The protein localises to the nucleus. It carries out the reaction O-phospho-L-tyrosyl-[protein] + H2O = L-tyrosyl-[protein] + phosphate. It catalyses the reaction O-phospho-L-seryl-[protein] + H2O = L-seryl-[protein] + phosphate. The catalysed reaction is O-phospho-L-threonyl-[protein] + H2O = L-threonyl-[protein] + phosphate. Its function is as follows. Plays an important role in preventing glycogen hyperphosphorylation and the formation of insoluble aggregates, via its activity as glycogen phosphatase, and by promoting the ubiquitination of proteins involved in glycogen metabolism via its interaction with the E3 ubiquitin ligase NHLRC1/malin. Shows strong phosphatase activity towards complex carbohydrates in vitro, avoiding glycogen hyperphosphorylation which is associated with reduced branching and formation of insoluble aggregates. Dephosphorylates phosphotyrosine and synthetic substrates, such as para-nitrophenylphosphate (pNPP), and has low activity with phosphoserine and phosphothreonine substrates (in vitro). Has been shown to dephosphorylate MAPT. Forms a complex with NHLRC1/malin and HSP70, which suppresses the cellular toxicity of misfolded proteins by promoting their degradation through the ubiquitin-proteasome system (UPS). Acts as a scaffold protein to facilitate PPP1R3C/PTG ubiquitination by NHLRC1/malin. Also promotes proteasome-independent protein degradation through the macroautophagy pathway. Functionally, does not bind to glycogen. Lacks phosphatase activity and might function as a dominant-negative regulator for the phosphatase activity of isoform 1 and isoform 7. In terms of biological role, has phosphatase activity (in vitro). The sequence is that of Laforin (EPM2A) from Homo sapiens (Human).